The chain runs to 299 residues: Glycine--tRNA ligase alpha subunit (299 aa).

This sequence belongs to the class-II aminoacyl-tRNA synthetase family. Tetramer of two alpha and two beta subunits.

Its subcellular location is the cytoplasm. It catalyses the reaction tRNA(Gly) + glycine + ATP = glycyl-tRNA(Gly) + AMP + diphosphate. This is Glycine--tRNA ligase alpha subunit from Pediococcus pentosaceus (strain ATCC 25745 / CCUG 21536 / LMG 10740 / 183-1w).